Consider the following 333-residue polypeptide: DNA-directed RNA polymerase subunit alpha (333 aa).

Positions 1–234 (MQISVNEFLT…QQLAAFVDLK (234 aa)) are alpha N-terminal domain (alpha-NTD). The alpha C-terminal domain (alpha-CTD) stretch occupies residues 248-333 (IDPILLRPVD…SLKKDDKATA (86 aa)).

Belongs to the RNA polymerase alpha chain family. Homodimer. The RNAP catalytic core consists of 2 alpha, 1 beta, 1 beta' and 1 omega subunit. When a sigma factor is associated with the core the holoenzyme is formed, which can initiate transcription.

The catalysed reaction is RNA(n) + a ribonucleoside 5'-triphosphate = RNA(n+1) + diphosphate. DNA-dependent RNA polymerase catalyzes the transcription of DNA into RNA using the four ribonucleoside triphosphates as substrates. The sequence is that of DNA-directed RNA polymerase subunit alpha from Pseudomonas fluorescens (strain Pf0-1).